A 550-amino-acid chain; its full sequence is Arginine--tRNA ligase (550 aa).

The 'HIGH' region motif lies at 124–134; that stretch reads ANPTGPLHVGH.

This sequence belongs to the class-I aminoacyl-tRNA synthetase family. In terms of assembly, monomer.

It localises to the cytoplasm. It catalyses the reaction tRNA(Arg) + L-arginine + ATP = L-arginyl-tRNA(Arg) + AMP + diphosphate. The polypeptide is Arginine--tRNA ligase (Desulfovibrio desulfuricans (strain ATCC 27774 / DSM 6949 / MB)).